The following is a 367-amino-acid chain: 2-aminoethylphosphonate--pyruvate transaminase (367 aa).

Lys-193 carries the N6-(pyridoxal phosphate)lysine modification.

The protein belongs to the class-V pyridoxal-phosphate-dependent aminotransferase family. PhnW subfamily. As to quaternary structure, homodimer. It depends on pyridoxal 5'-phosphate as a cofactor.

The catalysed reaction is (2-aminoethyl)phosphonate + pyruvate = phosphonoacetaldehyde + L-alanine. Functionally, involved in phosphonate degradation. This chain is 2-aminoethylphosphonate--pyruvate transaminase, found in Vibrio parahaemolyticus serotype O3:K6 (strain RIMD 2210633).